We begin with the raw amino-acid sequence, 450 residues long: Glucose-6-phosphate isomerase (450 aa).

Residue Glu290 is the Proton donor of the active site. Residues His311 and Lys425 contribute to the active site.

Belongs to the GPI family.

The protein resides in the cytoplasm. The catalysed reaction is alpha-D-glucose 6-phosphate = beta-D-fructose 6-phosphate. Its pathway is carbohydrate biosynthesis; gluconeogenesis. It functions in the pathway carbohydrate degradation; glycolysis; D-glyceraldehyde 3-phosphate and glycerone phosphate from D-glucose: step 2/4. Catalyzes the reversible isomerization of glucose-6-phosphate to fructose-6-phosphate. This Listeria innocua serovar 6a (strain ATCC BAA-680 / CLIP 11262) protein is Glucose-6-phosphate isomerase.